The sequence spans 968 residues: RNA polymerase-associated protein RapA (968 aa).

Residues Asp-164–Asn-334 form the Helicase ATP-binding domain. Asp-177–Thr-184 provides a ligand contact to ATP. The DEAH box motif lies at Asp-280–His-283. The Helicase C-terminal domain maps to Arg-490–Gly-662.

It belongs to the SNF2/RAD54 helicase family. RapA subfamily. As to quaternary structure, interacts with the RNAP. Has a higher affinity for the core RNAP than for the holoenzyme. Its ATPase activity is stimulated by binding to RNAP.

Transcription regulator that activates transcription by stimulating RNA polymerase (RNAP) recycling in case of stress conditions such as supercoiled DNA or high salt concentrations. Probably acts by releasing the RNAP, when it is trapped or immobilized on tightly supercoiled DNA. Does not activate transcription on linear DNA. Probably not involved in DNA repair. The protein is RNA polymerase-associated protein RapA of Shigella boydii serotype 4 (strain Sb227).